The primary structure comprises 119 residues: Holo-[acyl-carrier-protein] synthase (119 aa).

Residues D8 and E58 each coordinate Mg(2+).

The protein belongs to the P-Pant transferase superfamily. AcpS family. The cofactor is Mg(2+).

Its subcellular location is the cytoplasm. It carries out the reaction apo-[ACP] + CoA = holo-[ACP] + adenosine 3',5'-bisphosphate + H(+). Functionally, transfers the 4'-phosphopantetheine moiety from coenzyme A to a Ser of acyl-carrier-protein. The sequence is that of Holo-[acyl-carrier-protein] synthase from Limosilactobacillus fermentum (strain NBRC 3956 / LMG 18251) (Lactobacillus fermentum).